A 171-amino-acid polypeptide reads, in one-letter code: Neuronal vesicle trafficking-associated protein 2 (171 aa).

Positions Met1–Gly21 are disordered. At Met1 to Thr71 the chain is on the cytoplasmic side. The helical; Signal-anchor for type II membrane protein transmembrane segment at Val72–Tyr92 threads the bilayer. The Lumenal segment spans residues Lys93 to His171.

It belongs to the NSG family.

It is found in the membrane. The protein localises to the golgi apparatus. The protein resides in the trans-Golgi network membrane. It localises to the cell projection. Its subcellular location is the dendrite. It is found in the endosome membrane. The protein localises to the early endosome membrane. The protein resides in the late endosome membrane. It localises to the lysosome lumen. Its subcellular location is the cytoplasmic vesicle membrane. It is found in the golgi stack membrane. The protein localises to the endosome. The protein resides in the multivesicular body membrane. The protein is Neuronal vesicle trafficking-associated protein 2 of Rattus norvegicus (Rat).